Consider the following 352-residue polypeptide: Uroporphyrinogen decarboxylase (352 aa).

Residues 26-30 (RQAGR), Asp76, Tyr153, Ser208, and His323 each bind substrate.

It belongs to the uroporphyrinogen decarboxylase family. In terms of assembly, homodimer.

The protein resides in the cytoplasm. The catalysed reaction is uroporphyrinogen III + 4 H(+) = coproporphyrinogen III + 4 CO2. It functions in the pathway porphyrin-containing compound metabolism; protoporphyrin-IX biosynthesis; coproporphyrinogen-III from 5-aminolevulinate: step 4/4. Its function is as follows. Catalyzes the decarboxylation of four acetate groups of uroporphyrinogen-III to yield coproporphyrinogen-III. This chain is Uroporphyrinogen decarboxylase, found in Prochlorococcus marinus (strain NATL1A).